The chain runs to 142 residues: ATP synthase epsilon chain (142 aa).

It belongs to the ATPase epsilon chain family. As to quaternary structure, F-type ATPases have 2 components, CF(1) - the catalytic core - and CF(0) - the membrane proton channel. CF(1) has five subunits: alpha(3), beta(3), gamma(1), delta(1), epsilon(1). CF(0) has three main subunits: a, b and c.

It localises to the cell inner membrane. Its function is as follows. Produces ATP from ADP in the presence of a proton gradient across the membrane. The protein is ATP synthase epsilon chain of Shewanella putrefaciens (strain CN-32 / ATCC BAA-453).